The primary structure comprises 379 residues: Dual-specificity RNA methyltransferase RlmN (379 aa).

The active-site Proton acceptor is E96. Positions 102 to 342 (TDDRGTLCVS…TRTTRGDDID (241 aa)) constitute a Radical SAM core domain. C109 and C345 are joined by a disulfide. Positions 116, 120, and 123 each coordinate [4Fe-4S] cluster. Residues 170-171 (GE), S202, 224-226 (SLH), and N302 each bind S-adenosyl-L-methionine. C345 acts as the S-methylcysteine intermediate in catalysis.

It belongs to the radical SAM superfamily. RlmN family. It depends on [4Fe-4S] cluster as a cofactor.

It localises to the cytoplasm. It carries out the reaction adenosine(2503) in 23S rRNA + 2 reduced [2Fe-2S]-[ferredoxin] + 2 S-adenosyl-L-methionine = 2-methyladenosine(2503) in 23S rRNA + 5'-deoxyadenosine + L-methionine + 2 oxidized [2Fe-2S]-[ferredoxin] + S-adenosyl-L-homocysteine. The enzyme catalyses adenosine(37) in tRNA + 2 reduced [2Fe-2S]-[ferredoxin] + 2 S-adenosyl-L-methionine = 2-methyladenosine(37) in tRNA + 5'-deoxyadenosine + L-methionine + 2 oxidized [2Fe-2S]-[ferredoxin] + S-adenosyl-L-homocysteine. Its function is as follows. Specifically methylates position 2 of adenine 2503 in 23S rRNA and position 2 of adenine 37 in tRNAs. m2A2503 modification seems to play a crucial role in the proofreading step occurring at the peptidyl transferase center and thus would serve to optimize ribosomal fidelity. The sequence is that of Dual-specificity RNA methyltransferase RlmN from Pseudomonas entomophila (strain L48).